The primary structure comprises 262 residues: Tryptophan synthase alpha chain (262 aa).

Residues glutamate 49 and aspartate 60 each act as proton acceptor in the active site.

Belongs to the TrpA family. As to quaternary structure, tetramer of two alpha and two beta chains.

It carries out the reaction (1S,2R)-1-C-(indol-3-yl)glycerol 3-phosphate + L-serine = D-glyceraldehyde 3-phosphate + L-tryptophan + H2O. It participates in amino-acid biosynthesis; L-tryptophan biosynthesis; L-tryptophan from chorismate: step 5/5. In terms of biological role, the alpha subunit is responsible for the aldol cleavage of indoleglycerol phosphate to indole and glyceraldehyde 3-phosphate. This chain is Tryptophan synthase alpha chain, found in Aquifex aeolicus (strain VF5).